The following is a 191-amino-acid chain: Protein NUCLEAR FUSION DEFECTIVE 2 (191 aa).

Residues Met1–Ala29 form the signal peptide. The RNase III domain maps to Leu48 to Gly167.

Its function is as follows. Required for karyogamy during female gametophyte development, when the two polar nuclei fuse to form the diploid central cell nucleus. The protein is Protein NUCLEAR FUSION DEFECTIVE 2 of Arabidopsis thaliana (Mouse-ear cress).